The chain runs to 507 residues: F-box only protein 31 (507 aa).

The segment at 19–42 (RQQRRGPAETAAADSEADTDPEEE) is disordered. Residue Ser-33 is modified to Phosphoserine. Over residues 33–42 (SEADTDPEEE) the composition is skewed to acidic residues. Thr-37 carries the phosphothreonine modification. Residues 50–55 (RCSLLE) carry the D box motif. One can recognise an F-box domain in the interval 50 to 96 (RCSLLELPPELLVEIFASLPGTDLPSLAQVCSRFRRILHTDTIWRRR). Residues Cys-192, His-200, Cys-216, and His-222 each contribute to the Zn(2+) site. A Phosphoserine; by ATM modification is found at Ser-264. The short motif at 283-285 (DDL) is the DDL motif element. Positions 366–417 (EQEAGEGAAPPREPSAKAADGPPAKDGKEPGGGAEAAEQSASSGQGQPFVLP) are disordered. Over residues 400–412 (EAAEQSASSGQGQ) the composition is skewed to low complexity. A Phosphoserine modification is found at Ser-448.

This sequence belongs to the FBXO31 family. In terms of assembly, part of a SCF (SKP1-cullin-F-box) protein ligase complex SCF(FBXO31) composed of CUL1, SKP1, RBX1 and FBXO31. Interacts (when phosphorylated at Ser-33) with CDC20, promoting ubiquitination by the APC/C complex. In terms of processing, phosphorylation at Ser-264 by ATM following gamma-irradiation results in its stabilization. Phosphorylation at Ser-448 in absence of stress promotes its ubiquitination and degradation by the SCF(FBXO46) complex. Phosphorylation at Ser-33 by AKT1 promotes association with CDC20 and ubiquitination by the APC/C complex. Ubiquitinated by the SCF(FBXO46) complex in absence of stress, promoting its degradation. Ubiquitinated by the APC/C complex following phosphorylation at Ser-33, leading to its degradation by the proteasome.

It localises to the cytoplasm. It is found in the cytoskeleton. The protein localises to the microtubule organizing center. The protein resides in the centrosome. It participates in protein modification; protein ubiquitination. Substrate-recognition component of the SCF(FBXO31) protein ligase complex, which specifically mediates the ubiquitination of proteins amidated at their C-terminus in response to oxidative stress, leading to their degradation by the proteasome. FBXO31 specifically recognizes and binds C-terminal peptides bearing an amide: C-terminal amidation in response to oxidative stress takes place following protein fragmentation. The SCF(FBXO31) also plays a role in G1 arrest following DNA damage by mediating ubiquitination of phosphorylated cyclin-D1 (CCND1), promoting its degradation by the proteasome, resulting in G1 arrest. The SCF(FBXO31) complex is however not a major regulator of CCND1 stability during the G1/S transition. In response to genotoxic stress, the SCF(FBXO31) complex directs ubiquitination and degradation of phosphorylated MDM2, thereby promoting p53/TP53-mediated DNA damage response. SCF(FBXO31) complex is required for genomic integrity by catalyzing ubiquitination and degradation of cyclin-A (CCNA1 and/or CCNA2) during the G1 phase. In response to genotoxic stress, the SCF(FBXO31) complex directs ubiquitination and degradation of phosphorylated FBXO46 and MAP2K6. SCF(FBXO31) complex promotes ubiquitination and degradation of CDT1 during the G2 phase to prevent re-replication. The SCF(FBXO31) complex also mediates ubiquitination and degradation of DUSP6, OGT and PARD6A. This is F-box only protein 31 from Mus musculus (Mouse).